Consider the following 107-residue polypeptide: Large ribosomal subunit protein uL23 (107 aa).

This sequence belongs to the universal ribosomal protein uL23 family. Part of the 50S ribosomal subunit. Contacts protein L29, and trigger factor when it is bound to the ribosome.

One of the early assembly proteins it binds 23S rRNA. One of the proteins that surrounds the polypeptide exit tunnel on the outside of the ribosome. Forms the main docking site for trigger factor binding to the ribosome. This chain is Large ribosomal subunit protein uL23, found in Rhodopirellula baltica (strain DSM 10527 / NCIMB 13988 / SH1).